We begin with the raw amino-acid sequence, 124 residues long: Iron-sulfur cluster insertion protein ErpA (124 aa).

3 residues coordinate iron-sulfur cluster: C52, C116, and C118.

It belongs to the HesB/IscA family. In terms of assembly, homodimer. Iron-sulfur cluster is required as a cofactor.

Required for insertion of 4Fe-4S clusters for at least IspG. In Vibrio atlanticus (strain LGP32) (Vibrio splendidus (strain Mel32)), this protein is Iron-sulfur cluster insertion protein ErpA.